The sequence spans 257 residues: (R)-2-haloacid dehalogenase (257 aa).

The protein belongs to the HAD-like hydrolase superfamily. S-2-haloalkanoic acid dehalogenase family.

The enzyme catalyses an (R)-2-haloacid + H2O = a (2S)-2-hydroxycarboxylate + a halide anion + H(+). Functionally, catalyzes the hydrolytic dehalogenation of small (R)-2-haloalkanoic acids to yield the corresponding (S)-2-hydroxyalkanoic acids. Acts on acids of short chain lengths, C(2) to C(4), with inversion of configuration at C-2. This is (R)-2-haloacid dehalogenase (dehI) from Rhizobium sp. (strain NHG3).